Reading from the N-terminus, the 145-residue chain is MSRFLSNATNRIDAKGRVSVPSAFRSVLAQRNVQELYCFQDFVFPAISIGGPDLLERFERQIAAEDPFSPDANEMSLLIHGGGVFMKLDAEGRLMVTDFIRGFTGISDEVTFVGRADHFQLWQPQAFVAAQAQARGERKLAGKRS.

2 consecutive SpoVT-AbrB domains span residues 7-54 (NATN…GPDL) and 83-126 (GVFM…QPQA).

The protein belongs to the MraZ family. Forms oligomers.

It is found in the cytoplasm. The protein resides in the nucleoid. This chain is Transcriptional regulator MraZ, found in Rhizobium johnstonii (strain DSM 114642 / LMG 32736 / 3841) (Rhizobium leguminosarum bv. viciae).